A 118-amino-acid polypeptide reads, in one-letter code: UPF0382 membrane protein C1782.12c (118 aa).

Positions 1-18 (MTIWNVAALTGLLSVGLG) are cleaved as a signal peptide. Residues 19 to 40 (AYGSHGLQKRVQDPHLLKSWST) are Lumenal-facing. A helical membrane pass occupies residues 41–61 (ACTYLMFHSLATMAVSLHPVY). Residues 62 to 67 (GKSRWT) lie on the Cytoplasmic side of the membrane. A helical transmembrane segment spans residues 68-88 (GPLLITGSCLFSGTIYGLCLL). At 89 to 96 (PKGHSLRR) the chain is on the lumenal side. A helical transmembrane segment spans residues 97 to 117 (ILGPLTPIGGLVMLTGWATML). A topological domain (cytoplasmic) is located at residue Val118.

It belongs to the UPF0382 family.

Its subcellular location is the endoplasmic reticulum membrane. In Schizosaccharomyces pombe (strain 972 / ATCC 24843) (Fission yeast), this protein is UPF0382 membrane protein C1782.12c.